Reading from the N-terminus, the 414-residue chain is Transforming growth factor beta-2 proprotein (414 aa).

The signal sequence occupies residues 1–20 (MHYCVLSAFLLLHLVTVALS). N-linked (GlcNAc...) asparagine glycans are attached at residues Asn-72, Asn-140, and Asn-241. 4 disulfides stabilise this stretch: Cys-309–Cys-318, Cys-317–Cys-380, Cys-346–Cys-411, and Cys-350–Cys-413.

Belongs to the TGF-beta family. In terms of assembly, interacts with the serine proteases, HTRA1 and HTRA3. Interacts with ASPN. Interacts with MFAP5. As to quaternary structure, interacts with Transforming growth factor beta-2 (TGF-beta-2) chain; interaction is non-covalent and maintains (TGF-beta-2) in a latent state. Interacts with LRRC32/GARP; leading to regulate activation of TGF-beta-2. Interacts with NREP; the interaction results in a decrease in TGFB2 autoinduction. Transforming growth factor beta-2: Homodimer; disulfide-linked. Transforming growth factor beta-2: Interacts with TGF-beta receptors (TGFBR1 and TGFBR2), leading to signal transduction. The precursor proprotein is cleaved in the Golgi apparatus to form Transforming growth factor beta-2 (TGF-beta-2) and Latency-associated peptide (LAP) chains, which remain non-covalently linked, rendering TGF-beta-2 inactive.

Its subcellular location is the secreted. It is found in the extracellular space. The protein resides in the extracellular matrix. Its function is as follows. Precursor of the Latency-associated peptide (LAP) and Transforming growth factor beta-2 (TGF-beta-2) chains, which constitute the regulatory and active subunit of TGF-beta-2, respectively. Functionally, required to maintain the Transforming growth factor beta-2 (TGF-beta-2) chain in a latent state during storage in extracellular matrix. Associates non-covalently with TGF-beta-2 and regulates its activation via interaction with 'milieu molecules', such as LTBP1 and LRRC32/GARP, that control activation of TGF-beta-2. Multifunctional protein that regulates various processes such as angiogenesis and heart development. Activation into mature form follows different steps: following cleavage of the proprotein in the Golgi apparatus, Latency-associated peptide (LAP) and Transforming growth factor beta-2 (TGF-beta-2) chains remain non-covalently linked rendering TGF-beta-2 inactive during storage in extracellular matrix. At the same time, LAP chain interacts with 'milieu molecules', such as LTBP1 and LRRC32/GARP, that control activation of TGF-beta-2 and maintain it in a latent state during storage in extracellular milieus. Once activated following release of LAP, TGF-beta-2 acts by binding to TGF-beta receptors (TGFBR1 and TGFBR2), which transduce signal. The sequence is that of Transforming growth factor beta-2 proprotein (TGFB2) from Bos taurus (Bovine).